We begin with the raw amino-acid sequence, 379 residues long: Beta sliding clamp (379 aa).

Belongs to the beta sliding clamp family. As to quaternary structure, forms a ring-shaped head-to-tail homodimer around DNA which binds and tethers DNA polymerases and other proteins to the DNA. The DNA replisome complex has a single clamp-loading complex (3 tau and 1 each of delta, delta', psi and chi subunits) which binds 3 Pol III cores (1 core on the leading strand and 2 on the lagging strand) each with a beta sliding clamp dimer. Additional proteins in the replisome are other copies of gamma, psi and chi, Ssb, DNA helicase and RNA primase.

It localises to the cytoplasm. Functionally, confers DNA tethering and processivity to DNA polymerases and other proteins. Acts as a clamp, forming a ring around DNA (a reaction catalyzed by the clamp-loading complex) which diffuses in an ATP-independent manner freely and bidirectionally along dsDNA. Initially characterized for its ability to contact the catalytic subunit of DNA polymerase III (Pol III), a complex, multichain enzyme responsible for most of the replicative synthesis in bacteria; Pol III exhibits 3'-5' exonuclease proofreading activity. The beta chain is required for initiation of replication as well as for processivity of DNA replication. The polypeptide is Beta sliding clamp (dnaN) (Rickettsia bellii (strain RML369-C)).